The primary structure comprises 660 residues: Kinesin-like protein KIF2A (660 aa).

A disordered region spans residues 1-140 (MVTSLNEDNE…QQELREKRAQ (140 aa)). The globular stretch occupies residues 1–171 (MVTSLNEDNE…LDYRPLTTAD (171 aa)). At serine 48 the chain carries Phosphoserine. Residues threonine 51 and threonine 70 each carry the phosphothreonine modification. A Phosphoserine modification is found at serine 73. Lysine 75 carries the post-translational modification N6-acetyllysine. The span at 96-106 (LPEQSSSAQQN) shows a compositional bias: polar residues. A compositionally biased stretch (basic and acidic residues) spans 113–140 (CVKEVEKLQEKREKRRLQQQELREKRAQ). The Kinesin motor domain occupies 177 to 507 (RICVCVRKRP…LRYANRVKEL (331 aa)). 267–274 (GQTGSGKT) serves as a coordination point for ATP. Residues 614 to 653 (ATQLEAILEQKIDILTELRDKVKSFRAALQEEEQASKQIN) adopt a coiled-coil conformation.

It belongs to the TRAFAC class myosin-kinesin ATPase superfamily. Kinesin family. MCAK/KIF2 subfamily. In terms of assembly, interacts with AURKA and PLK1. Interacts with PSRC1. Interacts with MCRS1; the interaction enhances recruitment of KIF2A to the minus ends of spindle microtubules which promotes chromosome alignment.

It localises to the cytoplasm. Its subcellular location is the cytoskeleton. It is found in the microtubule organizing center. The protein resides in the centrosome. The protein localises to the spindle pole. It localises to the spindle. In terms of biological role, plus end-directed microtubule-dependent motor required for normal brain development. May regulate microtubule dynamics during axonal growth. Required for normal progression through mitosis. Required for normal congress of chromosomes at the metaphase plate. Required for normal spindle dynamics during mitosis. Promotes spindle turnover. Implicated in formation of bipolar mitotic spindles. Has microtubule depolymerization activity. The protein is Kinesin-like protein KIF2A (KIF2A) of Bos taurus (Bovine).